The following is a 241-amino-acid chain: Triosephosphate isomerase (241 aa).

Residue 9–11 (NWK) participates in substrate binding. His-96 serves as the catalytic Electrophile. The active-site Proton acceptor is Glu-165. Residues Gly-171, Ser-204, and 225–226 (GG) contribute to the substrate site.

Belongs to the triosephosphate isomerase family. Homodimer.

It localises to the cytoplasm. It carries out the reaction D-glyceraldehyde 3-phosphate = dihydroxyacetone phosphate. The protein operates within carbohydrate biosynthesis; gluconeogenesis. It participates in carbohydrate degradation; glycolysis; D-glyceraldehyde 3-phosphate from glycerone phosphate: step 1/1. Involved in the gluconeogenesis. Catalyzes stereospecifically the conversion of dihydroxyacetone phosphate (DHAP) to D-glyceraldehyde-3-phosphate (G3P). This is Triosephosphate isomerase from Prochlorococcus marinus subsp. pastoris (strain CCMP1986 / NIES-2087 / MED4).